The chain runs to 291 residues: Protease HtpX (291 aa).

2 helical membrane-spanning segments follow: residues 4–24 and 36–56; these read IALF…VLNI and LSGL…VSLL. His-143 lines the Zn(2+) pocket. Glu-144 is a catalytic residue. His-147 serves as a coordination point for Zn(2+). The next 2 membrane-spanning stretches (helical) occupy residues 151 to 171 and 199 to 219; these read GDMI…IFLS and FIVS…LTMW. Residue Glu-225 coordinates Zn(2+).

The protein belongs to the peptidase M48B family. Zn(2+) is required as a cofactor.

It localises to the cell inner membrane. This Aliivibrio salmonicida (strain LFI1238) (Vibrio salmonicida (strain LFI1238)) protein is Protease HtpX.